Consider the following 306-residue polypeptide: Methionyl-tRNA formyltransferase (306 aa).

110 to 113 (SLLP) is a (6S)-5,6,7,8-tetrahydrofolate binding site.

It belongs to the Fmt family.

It catalyses the reaction L-methionyl-tRNA(fMet) + (6R)-10-formyltetrahydrofolate = N-formyl-L-methionyl-tRNA(fMet) + (6S)-5,6,7,8-tetrahydrofolate + H(+). Attaches a formyl group to the free amino group of methionyl-tRNA(fMet). The formyl group appears to play a dual role in the initiator identity of N-formylmethionyl-tRNA by promoting its recognition by IF2 and preventing the misappropriation of this tRNA by the elongation apparatus. In Brucella anthropi (strain ATCC 49188 / DSM 6882 / CCUG 24695 / JCM 21032 / LMG 3331 / NBRC 15819 / NCTC 12168 / Alc 37) (Ochrobactrum anthropi), this protein is Methionyl-tRNA formyltransferase.